We begin with the raw amino-acid sequence, 173 residues long: T-complex protein 1 subunit alpha (173 aa).

This sequence belongs to the TCP-1 chaperonin family. Component of the chaperonin-containing T-complex (TRiC), a heterooligomeric complex of about 850 to 900 kDa that forms two stacked rings, 12 to 16 nm in diameter.

The protein resides in the cytoplasm. It is found in the cytosol. Its function is as follows. Component of the chaperonin-containing T-complex (TRiC), a molecular chaperone complex that assists the folding of proteins upon ATP hydrolysis. The polypeptide is T-complex protein 1 subunit alpha (Ambystoma mexicanum (Axolotl)).